Consider the following 290-residue polypeptide: Ribosomal RNA small subunit methyltransferase A (290 aa).

Residues Asn-28, Leu-30, Gly-55, Glu-76, Asp-102, and Asn-126 each coordinate S-adenosyl-L-methionine.

The protein belongs to the class I-like SAM-binding methyltransferase superfamily. rRNA adenine N(6)-methyltransferase family. RsmA subfamily.

It is found in the cytoplasm. The enzyme catalyses adenosine(1518)/adenosine(1519) in 16S rRNA + 4 S-adenosyl-L-methionine = N(6)-dimethyladenosine(1518)/N(6)-dimethyladenosine(1519) in 16S rRNA + 4 S-adenosyl-L-homocysteine + 4 H(+). Functionally, specifically dimethylates two adjacent adenosines (A1518 and A1519) in the loop of a conserved hairpin near the 3'-end of 16S rRNA in the 30S particle. May play a critical role in biogenesis of 30S subunits. The protein is Ribosomal RNA small subunit methyltransferase A of Lachnoclostridium phytofermentans (strain ATCC 700394 / DSM 18823 / ISDg) (Clostridium phytofermentans).